Consider the following 495-residue polypeptide: N-succinylglutamate 5-semialdehyde dehydrogenase (495 aa).

220-225 (GSAGTG) contacts NAD(+). Active-site residues include Glu-243 and Cys-277.

It belongs to the aldehyde dehydrogenase family. AstD subfamily.

It carries out the reaction N-succinyl-L-glutamate 5-semialdehyde + NAD(+) + H2O = N-succinyl-L-glutamate + NADH + 2 H(+). It participates in amino-acid degradation; L-arginine degradation via AST pathway; L-glutamate and succinate from L-arginine: step 4/5. Its function is as follows. Catalyzes the NAD-dependent reduction of succinylglutamate semialdehyde into succinylglutamate. The sequence is that of N-succinylglutamate 5-semialdehyde dehydrogenase from Enterobacter sp. (strain 638).